The chain runs to 108 residues: UPF0235 protein APE_0182.1 (108 aa).

It belongs to the UPF0235 family.

This chain is UPF0235 protein APE_0182.1, found in Aeropyrum pernix (strain ATCC 700893 / DSM 11879 / JCM 9820 / NBRC 100138 / K1).